We begin with the raw amino-acid sequence, 381 residues long: MPFSNSHNALKLRFPAEDEFPDLSAHNNHMAKVLTPELYAELRAKSTPSGFTLDDVIQTGVDNPGHPYIMTVGCVAGDEESYEVFKDLFDPIIEDRHGGYKPSDEHKTDLNPDNLQGGDDLDPNYVLSSRVRTGRSIRGFCLPPHCSRGERRAIEKLAVEALSSLDGDLAGRYYALKSMTEAEQQQLIDDHFLFDKPVSPLLLASGMARDWPDARGIWHNDNKTFLVWVNEEDHLRVISMQKGGNMKEVFTRFCTGLTQIETLFKSKDYEFMWNPHLGYILTCPSNLGTGLRAGVHIKLPNLGKHEKFSEVLKRLRLQKRGTGGVDTAAVGGVFDVSNADRLGFSEVELVQMVVDGVKLLIEMEQRLEQGQAIDDLMPAQK.

Position 4 is a phosphoserine (Ser4). The region spanning 11 to 98 (KLRFPAEDEF…FDPIIEDRHG (88 aa)) is the Phosphagen kinase N-terminal domain. A Phosphothreonine modification is found at Thr35. Lys45 participates in a covalent cross-link: Glycyl lysine isopeptide (Lys-Gly) (interchain with G-Cter in ubiquitin). Val72 lines the creatine pocket. The span at 96–110 (RHGGYKPSDEHKTDL) shows a compositional bias: basic and acidic residues. The disordered stretch occupies residues 96-122 (RHGGYKPSDEHKTDLNPDNLQGGDDLD). Glycyl lysine isopeptide (Lys-Gly) (interchain with G-Cter in ubiquitin) cross-links involve residues Lys101 and Lys107. Tyr125 is modified (phosphotyrosine). A Phosphagen kinase C-terminal domain is found at 125–367 (YVLSSRVRTG…KLLIEMEQRL (243 aa)). ATP-binding positions include 128–132 (SSRVR), Arg130, Arg132, and His191. The internal MTS-like signal stretch occupies residues 130–138 (RVRTGRSIR). At Ser199 the chain carries Phosphoserine. A creatine-binding site is contributed by Glu232. Residue Arg236 coordinates ATP. Tyr269 is modified (3'-nitrotyrosine). Creatine is bound at residue Ser285. Residue Arg292 coordinates ATP. Ser309 bears the Phosphoserine mark. ATP-binding positions include Arg320, 320 to 325 (RGTGGV), and Asp335. Thr322 is subject to Phosphothreonine. Lys381 participates in a covalent cross-link: Glycyl lysine isopeptide (Lys-Gly) (interchain with G-Cter in ubiquitin).

This sequence belongs to the ATP:guanido phosphotransferase family. Dimer of identical or non-identical chains, which can be either B (brain type) or M (muscle type). With MM being the major form in skeletal muscle and myocardium, MB existing in myocardium, and BB existing in many tissues, especially brain. Interacts with SLC12A6 (via C-terminus); the interaction may be required for SLC12A6 potassium-chloride cotransport activity. In terms of processing, ubiquitinated by the ECS(ASB9) complex, leading to its degradation by the proteasome.

Its subcellular location is the cytoplasm. The protein localises to the cytosol. It is found in the mitochondrion. The protein resides in the cell membrane. The catalysed reaction is creatine + ATP = N-phosphocreatine + ADP + H(+). Its function is as follows. Reversibly catalyzes the transfer of phosphate between ATP and various phosphogens (e.g. creatine phosphate). Creatine kinase isoenzymes play a central role in energy transduction in tissues with large, fluctuating energy demands, such as skeletal muscle, heart, brain and spermatozoa. Acts as a key regulator of adaptive thermogenesis as part of the futile creatine cycle: localizes to the mitochondria of thermogenic fat cells and acts by mediating phosphorylation of creatine to initiate a futile cycle of creatine phosphorylation and dephosphorylation. During the futile creatine cycle, creatine and N-phosphocreatine are in a futile cycle, which dissipates the high energy charge of N-phosphocreatine as heat without performing any mechanical or chemical work. In Homo sapiens (Human), this protein is Creatine kinase B-type.